The primary structure comprises 440 residues: NADH-quinone oxidoreductase subunit D (440 aa).

Belongs to the complex I 49 kDa subunit family. In terms of assembly, NDH-1 is composed of 14 different subunits. Subunits NuoB, C, D, E, F, and G constitute the peripheral sector of the complex.

Its subcellular location is the cell membrane. It catalyses the reaction a quinone + NADH + 5 H(+)(in) = a quinol + NAD(+) + 4 H(+)(out). NDH-1 shuttles electrons from NADH, via FMN and iron-sulfur (Fe-S) centers, to quinones in the respiratory chain. The immediate electron acceptor for the enzyme in this species is believed to be a menaquinone. Couples the redox reaction to proton translocation (for every two electrons transferred, four hydrogen ions are translocated across the cytoplasmic membrane), and thus conserves the redox energy in a proton gradient. The sequence is that of NADH-quinone oxidoreductase subunit D from Mycobacterium bovis (strain ATCC BAA-935 / AF2122/97).